The primary structure comprises 318 residues: Nisin-resistance protein (318 aa).

A helical transmembrane segment spans residues Ile7–Lys28.

The protein resides in the cell membrane. The chain is Nisin-resistance protein (nsr) from Lactococcus lactis subsp. lactis (Streptococcus lactis).